A 782-amino-acid polypeptide reads, in one-letter code: E3 ubiquitin-protein ligase SopA (782 aa).

The tract at residues 137 to 171 is disordered; sequence VSVSANNRPTVSEGRTPPVSPSLSLQATSSPSSPA. Residues 157 to 171 show a composition bias toward low complexity; sequence PSLSLQATSSPSSPA. Cys753 functions as the Glycyl thioester intermediate in the catalytic mechanism.

Belongs to the SopA E3 ligase family. Ubiquitinated in the presence of host E1 ubiquitin-activating enzyme, E2 ubiquitin-conjugating enzyme and ubiquitin.

It is found in the secreted. Its subcellular location is the host mitochondrion. The catalysed reaction is S-ubiquitinyl-[E2 ubiquitin-conjugating enzyme]-L-cysteine + [acceptor protein]-L-lysine = [E2 ubiquitin-conjugating enzyme]-L-cysteine + N(6)-ubiquitinyl-[acceptor protein]-L-lysine.. Its function is as follows. Effector proteins function to alter host cell physiology and promote bacterial survival in host tissues. This protein is an E3 ubiquitin ligase that interferes with host's ubiquitination pathway. Required for inducing polymorphonuclear leukocytes migration across the intestinal epithelium. This is E3 ubiquitin-protein ligase SopA (sopA) from Salmonella dublin.